The chain runs to 1144 residues: Type II inositol polyphosphate 5-phosphatase 14 (1144 aa).

2 disordered regions span residues 15 to 67 (ASLV…FDSS) and 81 to 118 (GRTS…DDIE). WD repeat units follow at residues 158–196 (ETQT…EVGC), 216–255 (VPTS…TTTA), 269–307 (AHRG…KSLV), 445–483 (EDTR…LREV), and 524–561 (SHNE…PLDS). Catalytic regions lie at residues 791–807 (DLVA…FGIT) and 870–885 (KKRI…YRDN). Residue K949 forms a Glycyl lysine isopeptide (Lys-Gly) (interchain with G-Cter in ubiquitin) linkage. Positions 1111–1131 (TTMTKNLEGSTRYQTDANRGG) are enriched in polar residues. The interval 1111-1144 (TTMTKNLEGSTRYQTDANRGGSTRHRTDDSTRRG) is disordered. Basic and acidic residues predominate over residues 1135-1144 (HRTDDSTRRG).

The protein belongs to the inositol polyphosphate 5-phosphatase family. The cofactor is Mg(2+). As to expression, expressed in young seedlings and flowers.

It catalyses the reaction a 1,2-diacyl-sn-glycero-3-phospho-(1D-myo-inositol-4,5-bisphosphate) + H2O = a 1,2-diacyl-sn-glycero-3-phospho-(1D-myo-inositol 4-phosphate) + phosphate. The catalysed reaction is a 1,2-diacyl-sn-glycero-3-phospho-(1D-myo-inositol-3,4,5-trisphosphate) + H2O = a 1,2-diacyl-sn-glycero-3-phospho-(1D-myo-inositol-3,4-bisphosphate) + phosphate. It carries out the reaction 1D-myo-inositol 1,4,5-trisphosphate + H2O = 1D-myo-inositol 1,4-bisphosphate + phosphate. Functionally, has phosphatase activity toward PtdIns(4,5)P2, PtdIns(3,4,5)P3 and Ins(1,4,5)P3. The polypeptide is Type II inositol polyphosphate 5-phosphatase 14 (Arabidopsis thaliana (Mouse-ear cress)).